Consider the following 161-residue polypeptide: uncharacterized protein (161 aa).

Disordered stretches follow at residues 1–67 (MNSN…IQNF) and 80–147 (DSHQ…KKKQ). The segment covering 84-126 (NFNDNGFNNNNNNNNSNMNHNFSNQNNYNNNNNNNNNNNSNFN) has biased composition (low complexity). Positions 135–147 (GTSSQVGNNKKKQ) are enriched in polar residues.

This is an uncharacterized protein from Dictyostelium discoideum (Social amoeba).